The primary structure comprises 156 residues: Snaclec A2 (156 aa).

The N-terminal stretch at 1–23 (MGRLISVSFGLLVVFLSLSGTGA) is a signal peptide. 3 cysteine pairs are disulfide-bonded: Cys27-Cys38, Cys55-Cys154, and Cys129-Cys146. A C-type lectin domain is found at 34 to 155 (HEGHCYKVFN…CGQPYRFTCE (122 aa)).

This sequence belongs to the snaclec family. As to quaternary structure, heterodimer; disulfide-linked. In terms of tissue distribution, expressed by the venom gland.

It is found in the secreted. Interferes with one step of hemostasis (modulation of platelet aggregation, or coagulation cascade, for example). This chain is Snaclec A2, found in Macrovipera lebetinus (Levantine viper).